A 103-amino-acid polypeptide reads, in one-letter code: Integration host factor subunit alpha (103 aa).

Residues 50-72 (GNFNLRDKGERPGRNPKTGEEIP) form a disordered region. Residues 54–69 (LRDKGERPGRNPKTGE) are compositionally biased toward basic and acidic residues.

The protein belongs to the bacterial histone-like protein family. As to quaternary structure, heterodimer of an alpha and a beta chain.

Functionally, this protein is one of the two subunits of integration host factor, a specific DNA-binding protein that functions in genetic recombination as well as in transcriptional and translational control. The protein is Integration host factor subunit alpha of Coxiella burnetii (strain CbuK_Q154) (Coxiella burnetii (strain Q154)).